A 78-amino-acid polypeptide reads, in one-letter code: Calcium/calmodulin-dependent protein kinase II inhibitor 1 (78 aa).

A CAMK2 inhibitory domain region spans residues 41–68 (NKRPPKLGQIGRSKRVVIEDDRIDDVLK).

The protein belongs to the CAMK2N family. Interacts with CAMK2B; the presence of Ca(2+)/calmodulin increases the interaction but is not essential. Interacts with CAMK2A; this interaction requires CAMK2A activation by Ca(2+).

The protein localises to the synapse. It is found in the cell projection. Its subcellular location is the dendrite. It localises to the postsynaptic density. Functionally, potent and specific inhibitor of CaM-kinase II (CAMK2). Plays a role in the maintenance of long-term retrieval-induced memory in response to contextual fear. Modulates blood pressure and vascular reactivity via regulation of CAMK2 activity in addition to regulation of left ventricular mass. Mediates the NLRP3 inflammasome in cardiomyocytes via acting as an inhibitor of the MAPK14/p38 and MAPK8/JNK pathways, thereby regulating ventricular remodeling and cardiac rhythm post-myocardial infarction. Negatively effects insulin sensitivity and promotes lipid formation in adipose tissues independent of CAMK2 signaling. This Homo sapiens (Human) protein is Calcium/calmodulin-dependent protein kinase II inhibitor 1 (CAMK2N1).